The following is a 379-amino-acid chain: Putative beta-glucosidase 6 (379 aa).

Positions M1–C20 are cleaved as a signal peptide. A beta-D-glucoside-binding positions include Q43, H141, and N186 to E187. E187 acts as the Proton donor in catalysis. C206 and C213 are joined by a disulfide. N217 carries N-linked (GlcNAc...) asparagine glycosylation. An a beta-D-glucoside-binding site is contributed by Y329. N362 carries N-linked (GlcNAc...) asparagine glycosylation.

Belongs to the glycosyl hydrolase 1 family.

The enzyme catalyses Hydrolysis of terminal, non-reducing beta-D-glucosyl residues with release of beta-D-glucose.. This Arabidopsis thaliana (Mouse-ear cress) protein is Putative beta-glucosidase 6.